We begin with the raw amino-acid sequence, 269 residues long: Formamidopyrimidine-DNA glycosylase (269 aa).

Proline 2 functions as the Schiff-base intermediate with DNA in the catalytic mechanism. The active-site Proton donor is glutamate 3. Lysine 57 functions as the Proton donor; for beta-elimination activity in the catalytic mechanism. Histidine 90, arginine 109, and lysine 150 together coordinate DNA. The FPG-type zinc finger occupies 235-269; that stretch reads QVYGRKGEPCRVCGTPIVATKHAQRATFYCRQCQK. Residue arginine 259 is the Proton donor; for delta-elimination activity of the active site.

It belongs to the FPG family. Monomer. Requires Zn(2+) as cofactor.

It carries out the reaction Hydrolysis of DNA containing ring-opened 7-methylguanine residues, releasing 2,6-diamino-4-hydroxy-5-(N-methyl)formamidopyrimidine.. It catalyses the reaction 2'-deoxyribonucleotide-(2'-deoxyribose 5'-phosphate)-2'-deoxyribonucleotide-DNA = a 3'-end 2'-deoxyribonucleotide-(2,3-dehydro-2,3-deoxyribose 5'-phosphate)-DNA + a 5'-end 5'-phospho-2'-deoxyribonucleoside-DNA + H(+). In terms of biological role, involved in base excision repair of DNA damaged by oxidation or by mutagenic agents. Acts as a DNA glycosylase that recognizes and removes damaged bases. Has a preference for oxidized purines, such as 7,8-dihydro-8-oxoguanine (8-oxoG). Has AP (apurinic/apyrimidinic) lyase activity and introduces nicks in the DNA strand. Cleaves the DNA backbone by beta-delta elimination to generate a single-strand break at the site of the removed base with both 3'- and 5'-phosphates. In Escherichia coli O157:H7, this protein is Formamidopyrimidine-DNA glycosylase.